We begin with the raw amino-acid sequence, 240 residues long: Cell division control protein 14 (240 aa).

In terms of assembly, interacts with sid1.

It is found in the cytoplasm. The protein resides in the cytoskeleton. Its subcellular location is the microtubule organizing center. The protein localises to the spindle pole body. Has a role in the septation initiation network (SIN) required for cytokinesis. The protein is Cell division control protein 14 (cdc14) of Schizosaccharomyces pombe (strain 972 / ATCC 24843) (Fission yeast).